Reading from the N-terminus, the 172-residue chain is 3-hydroxydecanoyl-[acyl-carrier-protein] dehydratase (172 aa).

Residue His-71 is part of the active site.

The protein belongs to the thioester dehydratase family. FabA subfamily. Homodimer.

It localises to the cytoplasm. It carries out the reaction a (3R)-hydroxyacyl-[ACP] = a (2E)-enoyl-[ACP] + H2O. It catalyses the reaction (3R)-hydroxydecanoyl-[ACP] = (2E)-decenoyl-[ACP] + H2O. The catalysed reaction is (2E)-decenoyl-[ACP] = (3Z)-decenoyl-[ACP]. It functions in the pathway lipid metabolism; fatty acid biosynthesis. Functionally, necessary for the introduction of cis unsaturation into fatty acids. Catalyzes the dehydration of (3R)-3-hydroxydecanoyl-ACP to E-(2)-decenoyl-ACP and then its isomerization to Z-(3)-decenoyl-ACP. Can catalyze the dehydratase reaction for beta-hydroxyacyl-ACPs with saturated chain lengths up to 16:0, being most active on intermediate chain length. The sequence is that of 3-hydroxydecanoyl-[acyl-carrier-protein] dehydratase from Escherichia fergusonii (strain ATCC 35469 / DSM 13698 / CCUG 18766 / IAM 14443 / JCM 21226 / LMG 7866 / NBRC 102419 / NCTC 12128 / CDC 0568-73).